Consider the following 83-residue polypeptide: Mu-theraphotoxin-Hhn2g (83 aa).

Residues 1–21 (MKASMYLALAGLVLLFVVGYA) form the signal peptide. A propeptide spanning residues 22–48 (SESEEKEFPRELLSKIFAVDDFKGEER) is cleaved from the precursor. Disulfide bonds link Cys-50/Cys-65 and Cys-57/Cys-70. Leu-81 is subject to Leucine amide.

This sequence belongs to the neurotoxin 10 (Hwtx-1) family. 15 (Hntx-3) subfamily. In terms of assembly, monomer. As to expression, expressed by the venom gland.

It localises to the secreted. In terms of biological role, lethal neurotoxin. Selectively blocks tetrodotoxin-sensitive voltage-gated sodium channels (Nav). Does not affect tetrodotoxin-resistant voltage-gated sodium channels or calcium channels. The protein is Mu-theraphotoxin-Hhn2g of Cyriopagopus hainanus (Chinese bird spider).